Consider the following 207-residue polypeptide: Ras-related protein Rab-8A (207 aa).

The GTP site is built by serine 17, glycine 18, valine 19, glycine 20, lysine 21, threonine 22, cysteine 23, serine 35, serine 39, and threonine 40. Mg(2+) is bound at residue threonine 22. Short sequence motifs (switch) lie at residues 31–45 (DAFN…GIDF) and 63–80 (DTAG…YYRG). Residues threonine 40 and aspartate 63 each contribute to the Mg(2+) site. Glycine 66 contacts GTP. Position 72 is a phosphothreonine (threonine 72). The GTP site is built by asparagine 121, lysine 122, aspartate 124, alanine 152, and lysine 153. Residues serine 181 and serine 185 each carry the phosphoserine modification. Cysteine 204 carries the cysteine methyl ester modification. Cysteine 204 carries the S-geranylgeranyl cysteine lipid modification. A propeptide spans 205–207 (VLL) (removed in mature form).

Belongs to the small GTPase superfamily. Rab family. As to quaternary structure, interacts (GTP-bound form) with MICALL1; regulates RAB8A association with recycling endosomes. Interacts with MICALL2; competes with RAB13 and is involved in E-cadherin endocytic recycling. Interacts (GTP-bound form) with MICAL1, MICALCL, MICAL3, EHBP1 and EHBP1L1; at least in case of MICAL1, MICALCL, MICAL3 and EHBP1L1 two molecules of RAB8A can bind to one molecule of the effector protein; ternary complexes of RAB8A, RAB13 and either MICAL1 or EHBP1L1 are possible. Interacts with EHD1. Interacts with MAP4K2 and SYTL4. Interacts with SGSM1 and SGSM3. Interacts with RABIF, RIMS2, RPH3A and RPH3A. Interacts with OPTN. Interacts with RAB3IP, RAB3IP functions as guanine exchange factor (GEF). Interacts with MYO5B. Interacts with CIMAP3. Interacts with BIRC6/bruce. Interacts with OCRL. Interacts with AHI1. Interacts with DCDC1. Interacts with LRRK2; interaction facilitates phosphorylation of Thr-72. Interacts with RAB31P, GDI1, GDI2, CHM, CHML, RABGGTA, RABGGTB, TBC1D15 and INPP5B; these interactions are dependent on Thr-72 not being phosphorylated. Interacts with RILPL1 and RILPL2; these interactions are dependent on the phosphorylation of Thr-72 by LRRK2. Interacts with DZIP1; prevents inhibition by the GDP-dissociation inhibitor GDI2. Interacts (in GDP-bound form) with RAB3IP/Rabin8, RAB3IP functions as guanine exchange factor (GEF) towards RAB8A. Interacts (in GDP-bound form) with RPGR, RPGR functions as GEF towards RAB8A. It depends on Mg(2+) as a cofactor. Phosphorylation of Thr-72 in the switch II region by LRRK2 prevents the association of RAB regulatory proteins, including CHM, CHML and RAB GDP dissociation inhibitors GDI1 and GDI2. Phosphorylation by LRRK2 is required for localization to stressed lysosomes.

The protein localises to the cell membrane. It localises to the golgi apparatus. Its subcellular location is the endosome membrane. The protein resides in the recycling endosome membrane. It is found in the cell projection. The protein localises to the cilium. It localises to the cytoplasmic vesicle. Its subcellular location is the phagosome membrane. The protein resides in the cytoplasm. It is found in the cytoskeleton. The protein localises to the microtubule organizing center. It localises to the centrosome. Its subcellular location is the centriole. The protein resides in the cilium basal body. It is found in the midbody. The protein localises to the lysosome. It carries out the reaction GTP + H2O = GDP + phosphate + H(+). Its activity is regulated as follows. Regulated by guanine nucleotide exchange factors (GEFs) such as RAB3IP/Rabin8 and RPGR which promote the exchange of bound GDP for free GTP, GTPase activating proteins (GAPs) which increase the GTP hydrolysis activity, and GDP dissociation inhibitors (GDIs) which inhibit the dissociation of the nucleotide from the GTPase. Activated in response to insulin. Functionally, the small GTPases Rab are key regulators of intracellular membrane trafficking, from the formation of transport vesicles to their fusion with membranes. Rabs cycle between an inactive GDP-bound form and an active GTP-bound form that is able to recruit to membranes different sets of downstream effectors directly responsible for vesicle formation, movement, tethering and fusion. RAB8A is involved in polarized vesicular trafficking and neurotransmitter release. Together with RAB11A, RAB3IP, the exocyst complex, PARD3, PRKCI, ANXA2, CDC42 and DNMBP promotes transcytosis of PODXL to the apical membrane initiation sites (AMIS), apical surface formation and lumenogenesis. Regulates the compacted morphology of the Golgi. Together with MYO5B and RAB11A participates in epithelial cell polarization. Also involved in membrane trafficking to the cilium and ciliogenesis. Together with MICALL2, may also regulate adherens junction assembly. May play a role in insulin-induced transport to the plasma membrane of the glucose transporter GLUT4 and therefore play a role in glucose homeostasis. Involved in autophagy. Participates in the export of a subset of neosynthesized proteins through a Rab8-Rab10-Rab11-dependent endososomal export route. Targeted to and stabilized on stressed lysosomes through LRRK2 phosphorylation. Suppresses stress-induced lysosomal enlargement through EHBP1 and EHNP1L1 effector proteins. The polypeptide is Ras-related protein Rab-8A (RAB8A) (Canis lupus familiaris (Dog)).